A 455-amino-acid polypeptide reads, in one-letter code: tRNA modification GTPase MnmE (455 aa).

(6S)-5-formyl-5,6,7,8-tetrahydrofolate contacts are provided by Lys29, Glu91, and Arg131. Positions 226-378 (GLKVALVGLP…LIQELLKLAG (153 aa)) constitute a TrmE-type G domain. Asn236 contributes to the K(+) binding site. Residues 236–241 (NVGKSS), 255–261 (TDLPGTT), 280–283 (DTAG), and 341–344 (NKAD) each bind GTP. Residue Ser240 participates in Mg(2+) binding. Thr255, Leu257, and Thr260 together coordinate K(+). Thr261 lines the Mg(2+) pocket. Lys455 is a (6S)-5-formyl-5,6,7,8-tetrahydrofolate binding site.

Belongs to the TRAFAC class TrmE-Era-EngA-EngB-Septin-like GTPase superfamily. TrmE GTPase family. In terms of assembly, homodimer. Heterotetramer of two MnmE and two MnmG subunits. Requires K(+) as cofactor.

The protein localises to the cytoplasm. Exhibits a very high intrinsic GTPase hydrolysis rate. Involved in the addition of a carboxymethylaminomethyl (cmnm) group at the wobble position (U34) of certain tRNAs, forming tRNA-cmnm(5)s(2)U34. This is tRNA modification GTPase MnmE from Prochlorococcus marinus (strain SARG / CCMP1375 / SS120).